Here is a 296-residue protein sequence, read N- to C-terminus: Ribose import binding protein RbsB (296 aa).

Positions 1–25 (MNMKKLATLVSAVALSATVSANAMA) are cleaved as a signal peptide.

This sequence belongs to the bacterial solute-binding protein 2 family. The complex is composed of an ATP-binding protein (RbsA), two transmembrane proteins (RbsC) and a solute-binding protein (RbsB).

Its subcellular location is the periplasm. In terms of biological role, part of the ABC transporter complex RbsABC involved in ribose import. Binds ribose. The sequence is that of Ribose import binding protein RbsB (rbsB) from Salmonella typhi.